A 92-amino-acid polypeptide reads, in one-letter code: Kinetoplastid membrane protein 11B (92 aa).

Belongs to the KMP-11 family. As to quaternary structure, monomer.

The protein localises to the cytoplasm. It is found in the cytoskeleton. The protein resides in the cell projection. Its subcellular location is the cilium. It localises to the flagellum. Functionally, may be involved in the regulation of the cytoskeleton through interaction with the subpellicular microtubules. May be involved in parasite mobility and attachment to the surface of the host cell. Behaves as a strong immunogen during infection. This Leishmania infantum protein is Kinetoplastid membrane protein 11B (KMP-11B).